Consider the following 257-residue polypeptide: Putative transcription factor R430 (257 aa).

Disordered regions lie at residues 1-35 and 58-77; these read MEKF…DNNS and SLKS…PNKS. The span at 7–25 shows a compositional bias: low complexity; sequence TDNTTDNTTDNTTDNTTDN. Positions 26-35 are enriched in basic and acidic residues; that stretch reads TTDKLTDNNS.

This sequence belongs to the nucleo-cytoplasmic large DNA viruses (NCLDVs) VLTF-3 family.

Its function is as follows. Putative transcription factor. The protein is Putative transcription factor R430 of Acanthamoeba polyphaga (Amoeba).